Reading from the N-terminus, the 82-residue chain is ATP synthase subunit c, chloroplastic (82 aa).

The next 2 membrane-spanning stretches (helical) occupy residues Ile4–Pro24 and Leu57–Ala77.

This sequence belongs to the ATPase C chain family. In terms of assembly, F-type ATPases have 2 components, F(1) - the catalytic core - and F(0) - the membrane proton channel. F(1) has five subunits: alpha(3), beta(3), gamma(1), delta(1), epsilon(1). F(0) has four main subunits: a(1), b(1), b'(1) and c(10-14). The alpha and beta chains form an alternating ring which encloses part of the gamma chain. F(1) is attached to F(0) by a central stalk formed by the gamma and epsilon chains, while a peripheral stalk is formed by the delta, b and b' chains.

The protein resides in the plastid. It localises to the chloroplast thylakoid membrane. In terms of biological role, f(1)F(0) ATP synthase produces ATP from ADP in the presence of a proton or sodium gradient. F-type ATPases consist of two structural domains, F(1) containing the extramembraneous catalytic core and F(0) containing the membrane proton channel, linked together by a central stalk and a peripheral stalk. During catalysis, ATP synthesis in the catalytic domain of F(1) is coupled via a rotary mechanism of the central stalk subunits to proton translocation. Its function is as follows. Key component of the F(0) channel; it plays a direct role in translocation across the membrane. A homomeric c-ring of between 10-14 subunits forms the central stalk rotor element with the F(1) delta and epsilon subunits. This is ATP synthase subunit c, chloroplastic from Antithamnion sp. (Red alga).